We begin with the raw amino-acid sequence, 316 residues long: Transaldolase (316 aa).

Lysine 131 acts as the Schiff-base intermediate with substrate in catalysis.

The protein belongs to the transaldolase family. Type 1 subfamily. In terms of assembly, homodimer.

It localises to the cytoplasm. The enzyme catalyses D-sedoheptulose 7-phosphate + D-glyceraldehyde 3-phosphate = D-erythrose 4-phosphate + beta-D-fructose 6-phosphate. Its pathway is carbohydrate degradation; pentose phosphate pathway; D-glyceraldehyde 3-phosphate and beta-D-fructose 6-phosphate from D-ribose 5-phosphate and D-xylulose 5-phosphate (non-oxidative stage): step 2/3. Its function is as follows. Transaldolase is important for the balance of metabolites in the pentose-phosphate pathway. The chain is Transaldolase from Glaesserella parasuis serovar 5 (strain SH0165) (Haemophilus parasuis).